The chain runs to 324 residues: Quinolinate synthase 2 (324 aa).

Positions 48 and 66 each coordinate iminosuccinate. Cys111 contributes to the [4Fe-4S] cluster binding site. Residues 137-139 (YVN) and Ser154 each bind iminosuccinate. Cys196 contributes to the [4Fe-4S] cluster binding site. Iminosuccinate-binding positions include 222–224 (HPE) and Thr239. Cys282 lines the [4Fe-4S] cluster pocket.

Belongs to the quinolinate synthase family. Type 2 subfamily. It depends on [4Fe-4S] cluster as a cofactor.

It localises to the cytoplasm. The catalysed reaction is iminosuccinate + dihydroxyacetone phosphate = quinolinate + phosphate + 2 H2O + H(+). It participates in cofactor biosynthesis; NAD(+) biosynthesis; quinolinate from iminoaspartate: step 1/1. In terms of biological role, catalyzes the condensation of iminoaspartate with dihydroxyacetone phosphate to form quinolinate. The chain is Quinolinate synthase 2 from Mesorhizobium japonicum (strain LMG 29417 / CECT 9101 / MAFF 303099) (Mesorhizobium loti (strain MAFF 303099)).